The primary structure comprises 428 residues: Enolase (428 aa).

Gln163 lines the (2R)-2-phosphoglycerate pocket. Glu205 functions as the Proton donor in the catalytic mechanism. Mg(2+) is bound by residues Asp242, Glu285, and Asp312. The (2R)-2-phosphoglycerate site is built by Lys337, Arg366, Ser367, and Lys388. The active-site Proton acceptor is Lys337.

It belongs to the enolase family. Requires Mg(2+) as cofactor.

It localises to the cytoplasm. The protein localises to the secreted. Its subcellular location is the cell surface. It carries out the reaction (2R)-2-phosphoglycerate = phosphoenolpyruvate + H2O. The protein operates within carbohydrate degradation; glycolysis; pyruvate from D-glyceraldehyde 3-phosphate: step 4/5. Catalyzes the reversible conversion of 2-phosphoglycerate (2-PG) into phosphoenolpyruvate (PEP). It is essential for the degradation of carbohydrates via glycolysis. This is Enolase from Nitrosomonas eutropha (strain DSM 101675 / C91 / Nm57).